The chain runs to 641 residues: Probable potassium transport system protein Kup 4 (641 aa).

Transmembrane regions (helical) follow at residues 31 to 51 (AALGALGIVYGDLGTSPLYTL), 64 to 84 (TASALGILSLLVWTLIITISI), 119 to 139 (ILAVMGLLGAALLYGDGVITP), 155 to 175 (GSLKPFVMPAAVAILIVFFAA), 183 to 203 (IGAAFGPIMLLWFLVIAVLGL), 221 to 241 (AIGFLAHSGGNGMLVLGGVFL), 265 to 285 (WYAIVLPSLLLSYAGQTALLI), 298 to 318 (LCPTWGVYPLVFLAMIATIIA), 355 to 375 (IYVPVVNWMMMVATIGITIAF), 381 to 401 (LAGAYGTAVSTTMLLTTCLLF), 412 to 432 (LAVSILIAGLFLIVDVGFFGA), and 437 to 457 (IAEGGWLPLTFGALVFFLMLT).

The protein belongs to the HAK/KUP transporter (TC 2.A.72) family.

Its subcellular location is the cell inner membrane. The enzyme catalyses K(+)(in) + H(+)(in) = K(+)(out) + H(+)(out). Functionally, transport of potassium into the cell. Likely operates as a K(+):H(+) symporter. The polypeptide is Probable potassium transport system protein Kup 4 (Bradyrhizobium sp. (strain BTAi1 / ATCC BAA-1182)).